The chain runs to 170 residues: Putative calmodulin-like protein 6 (170 aa).

EF-hand domains lie at 8–43, 44–79, 84–119, and 120–155; these read QQIS…LGMA, PSQE…KLYE, DDEE…LGEE, and MTED…TWNI. The Ca(2+) site is built by Asp21, Asn23, Asp25, Cys27, Glu32, Asp57, Asp59, Asn61, Thr63, Glu68, Asp97, Asp99, Asn101, Glu108, Asp133, Asn135, Asp137, Gln139, and Glu144.

The protein belongs to the calmodulin family.

In terms of biological role, potential calcium sensor. This Oryza sativa subsp. japonica (Rice) protein is Putative calmodulin-like protein 6 (CML6).